Here is a 258-residue protein sequence, read N- to C-terminus: Translocon-associated protein subunit alpha (258 aa).

Positions 1–24 (MMNLRVLFLALLLLASPLLQVARC) are cleaved as a signal peptide. Over 25 to 190 (QSDAEDHSSL…ESGGLLSGES (166 aa)) the chain is Lumenal. Residues asparagine 57, asparagine 119, and asparagine 127 are each glycosylated (N-linked (GlcNAc...) asparagine). Residues 191-209 (VFLLTLGIGLLLLLGLWAY) form a helical membrane-spanning segment. The Cytoplasmic segment spans residues 210–258 (SQVQRLTKKTKKVSKVEVGTRSTEASLDEWLEGTTLAKTSSGKTKNKKN).

This sequence belongs to the TRAP-alpha family. In terms of assembly, heterotetramer of TRAP-alpha, TRAP-beta, TRAP-delta and TRAP-gamma. Post-translationally, phosphorylated in its cytoplasmic tail.

The protein localises to the endoplasmic reticulum membrane. In terms of biological role, TRAP proteins are part of a complex whose function is to bind calcium to the ER membrane and thereby regulate the retention of ER resident proteins. May be involved in the recycling of the translocation apparatus after completion of the translocation process or may function as a membrane-bound chaperone facilitating folding of translocated proteins. The chain is Translocon-associated protein subunit alpha from Arabidopsis thaliana (Mouse-ear cress).